Reading from the N-terminus, the 229-residue chain is UPF0758 protein Fjoh_0413 (229 aa).

One can recognise an MPN domain in the interval Lys-107 to Phe-229. Residues His-178, His-180, and Asp-191 each coordinate Zn(2+). The JAMM motif signature appears at His-178–Asp-191.

The protein belongs to the UPF0758 family.

This chain is UPF0758 protein Fjoh_0413, found in Flavobacterium johnsoniae (strain ATCC 17061 / DSM 2064 / JCM 8514 / BCRC 14874 / CCUG 350202 / NBRC 14942 / NCIMB 11054 / UW101) (Cytophaga johnsonae).